We begin with the raw amino-acid sequence, 142 residues long: Large ribosomal subunit protein uL13 (142 aa).

This sequence belongs to the universal ribosomal protein uL13 family. In terms of assembly, part of the 50S ribosomal subunit.

Its function is as follows. This protein is one of the early assembly proteins of the 50S ribosomal subunit, although it is not seen to bind rRNA by itself. It is important during the early stages of 50S assembly. In Cellvibrio japonicus (strain Ueda107) (Pseudomonas fluorescens subsp. cellulosa), this protein is Large ribosomal subunit protein uL13.